Consider the following 277-residue polypeptide: Undecaprenyl-diphosphatase (277 aa).

Helical transmembrane passes span 47-67 (FNII…RGKI), 85-105 (ANLL…ADLI), 108-128 (WLFN…VMLW), 183-203 (AATE…AVYS), 218-238 (VFAV…RALL), and 249-269 (FAWY…FHLI).

It belongs to the UppP family.

The protein localises to the cell inner membrane. The enzyme catalyses di-trans,octa-cis-undecaprenyl diphosphate + H2O = di-trans,octa-cis-undecaprenyl phosphate + phosphate + H(+). In terms of biological role, catalyzes the dephosphorylation of undecaprenyl diphosphate (UPP). Confers resistance to bacitracin. The polypeptide is Undecaprenyl-diphosphatase (Pseudomonas aeruginosa (strain UCBPP-PA14)).